A 286-amino-acid polypeptide reads, in one-letter code: Orotidine 5'-phosphate decarboxylase (286 aa).

Substrate is bound by residues D35, 57 to 59 (KTH), 89 to 98 (DRKFADIGNT), Y239, and R257. K91 acts as the Proton donor in catalysis.

Belongs to the OMP decarboxylase family.

It carries out the reaction orotidine 5'-phosphate + H(+) = UMP + CO2. It functions in the pathway pyrimidine metabolism; UMP biosynthesis via de novo pathway; UMP from orotate: step 2/2. The sequence is that of Orotidine 5'-phosphate decarboxylase (URA3) from Yarrowia lipolytica (strain CLIB 122 / E 150) (Yeast).